We begin with the raw amino-acid sequence, 361 residues long: NAD(P)H-quinone oxidoreductase subunit 1, chloroplastic (361 aa).

A run of 7 helical transmembrane segments spans residues 28-48, 99-119, 128-148, 249-269, 270-290, 301-321, and 341-361; these read IWVL…VLVI, FTIG…VIPF, LSIG…GLLM, YSGI…LVSS, LFVT…LFVP, TIIC…ISIA, and FLLP…LLSL.

This sequence belongs to the complex I subunit 1 family. NDH is composed of at least 16 different subunits, 5 of which are encoded in the nucleus.

It localises to the plastid. The protein resides in the chloroplast thylakoid membrane. It catalyses the reaction a plastoquinone + NADH + (n+1) H(+)(in) = a plastoquinol + NAD(+) + n H(+)(out). The enzyme catalyses a plastoquinone + NADPH + (n+1) H(+)(in) = a plastoquinol + NADP(+) + n H(+)(out). NDH shuttles electrons from NAD(P)H:plastoquinone, via FMN and iron-sulfur (Fe-S) centers, to quinones in the photosynthetic chain and possibly in a chloroplast respiratory chain. The immediate electron acceptor for the enzyme in this species is believed to be plastoquinone. Couples the redox reaction to proton translocation, and thus conserves the redox energy in a proton gradient. This Jasminum nudiflorum (Winter jasmine) protein is NAD(P)H-quinone oxidoreductase subunit 1, chloroplastic.